Reading from the N-terminus, the 224-residue chain is Cysteine S-methyltransferase NleE (224 aa).

Residues 49–52 form an interaction with host proteins TAB2, TAB3 and ZRANB3 region; that stretch reads GITR. S-adenosyl-L-methionine contacts are provided by alanine 92, serine 98, arginine 107, glutamine 111, tyrosine 204, and glutamate 208.

It belongs to the NleE/OspZ family. In terms of assembly, monomer.

The protein resides in the secreted. The protein localises to the host nucleus. The catalysed reaction is L-cysteinyl-[protein] + S-adenosyl-L-methionine = S-methyl-L-cysteinyl-[protein] + S-adenosyl-L-homocysteine + H(+). Cysteine methyltransferase effector that inhibits host cell NF-kappa-B activation by preventing nuclear translocation of host protein RELA/p65. Acts by mediating cysteine methylation of host proteins TAB2 and TAB3: methylation of a conserved cysteine residue of the RanBP2-type zinc finger (NZF) of TAB2 and TAB3 disrupts zinc-binding, thereby inactivating the ubiquitin chain-binding activity of TAB2 and TAB3, leading to NF-kappa-B inactivation. Also mediates cysteine methylation of host protein ZRANB3, inactivating its ability to bind ubiquitin chains. This Escherichia coli O127:H6 (strain E2348/69 / EPEC) protein is Cysteine S-methyltransferase NleE.